The sequence spans 704 residues: Elongation factor G (704 aa).

The region spanning A8 to T290 is the tr-type G domain. GTP is bound by residues A17–T24, D88–H92, and N142–D145.

It belongs to the TRAFAC class translation factor GTPase superfamily. Classic translation factor GTPase family. EF-G/EF-2 subfamily.

It is found in the cytoplasm. Functionally, catalyzes the GTP-dependent ribosomal translocation step during translation elongation. During this step, the ribosome changes from the pre-translocational (PRE) to the post-translocational (POST) state as the newly formed A-site-bound peptidyl-tRNA and P-site-bound deacylated tRNA move to the P and E sites, respectively. Catalyzes the coordinated movement of the two tRNA molecules, the mRNA and conformational changes in the ribosome. This is Elongation factor G from Proteus mirabilis (strain HI4320).